A 670-amino-acid chain; its full sequence is Probable metal-nicotianamine transporter YSL4 (670 aa).

Transmembrane regions (helical) follow at residues 35-55, 59-79, 107-127, 151-171, 273-293, 318-338, 389-409, 416-436, 450-470, 507-527, 559-579, 601-621, and 636-656; these read ITIR…IITH, LTIG…FFFI, CVVS…LIAM, GLWW…FCLV, LVNC…WPFI, VFIA…KIIV, FAVS…PLIF, FVLC…YGAG, GLFI…GLAA, LGTA…WTAF, PKHC…VNLI, FYIG…MLVW, and VASG…ILSI.

The protein belongs to the YSL (TC 2.A.67.2) family.

Its subcellular location is the membrane. In terms of biological role, may be involved in the transport of nicotianamine-chelated metals. This chain is Probable metal-nicotianamine transporter YSL4 (YSL4), found in Arabidopsis thaliana (Mouse-ear cress).